Here is a 282-residue protein sequence, read N- to C-terminus: Elongation factor Ts (282 aa).

An involved in Mg(2+) ion dislocation from EF-Tu region spans residues 81 to 84 (TDFV). The span at 218–270 (KPAQPAQVAEVAAAPPAEPVADQPAAEPPAESVAPEPVVAESADAEPAPAAEG) shows a compositional bias: low complexity. Residues 218–282 (KPAQPAQVAE…SKKGSTKKKK (65 aa)) form a disordered region. The span at 273 to 282 (SKKGSTKKKK) shows a compositional bias: basic residues.

It belongs to the EF-Ts family.

The protein localises to the cytoplasm. Associates with the EF-Tu.GDP complex and induces the exchange of GDP to GTP. It remains bound to the aminoacyl-tRNA.EF-Tu.GTP complex up to the GTP hydrolysis stage on the ribosome. The protein is Elongation factor Ts of Synechococcus sp. (strain JA-3-3Ab) (Cyanobacteria bacterium Yellowstone A-Prime).